Consider the following 394-residue polypeptide: MSLKSILRDLKEVRDGLGGISKRSWSKSSHIAPDQTTPPLDNIPQSPWASLPPELLHDIIWRVEESETAWPARAAVVSCASVCKSWRGITMEIVRIPEQCGKLTFPISLKQPGPRDSPIQCFIKRNRATATYILYYGLMPSETENDKLLLAARRIRRATCTDFIISLSAKNFSRSSSTYVGKLRSGFLGTKFTIYDNQTASSTAQAQPNRRLHPKQAAPKLPTNSSTVGNITYELNVLRTRGPRRMHCAMDSIPLSSVIAEPSVVQGIEEEVSSSPSPKGETITTDKEIPDNSPSLRDQPLVLKNKSPRWHEQLQCWCLNFKGRVTVASVKNFQLVAEIDASLDAPPEEHERVILQFGKIGKDIFTMDYRYPLSAFQAFAICISSFDTKPACEG.

The interval 21-44 (SKRSWSKSSHIAPDQTTPPLDNIP) is disordered. Residues 26 to 44 (SKSSHIAPDQTTPPLDNIP) are compositionally biased toward polar residues. One can recognise an F-box domain in the interval 46-101 (SPWASLPPELLHDIIWRVEESETAWPARAAVVSCASVCKSWRGITMEIVRIPEQCG). Disordered stretches follow at residues 200–225 (ASST…PTNS) and 268–297 (IEEE…PSLR).

The protein belongs to the TUB family. In terms of tissue distribution, ubiquitous.

The polypeptide is Tubby-like F-box protein 2 (Arabidopsis thaliana (Mouse-ear cress)).